The chain runs to 82 residues: Toxin GTx1-15 (82 aa).

The N-terminal stretch at 1-21 (MKTSVVFVIAGLALLSVACYA) is a signal peptide. A propeptide spanning residues 22-46 (SELKEQSSINEVLSTIFHFEQPEER) is cleaved from the precursor. 3 disulfide bridges follow: Cys-48–Cys-63, Cys-55–Cys-69, and Cys-62–Cys-76. Phe-80 is modified (phenylalanine amide).

This sequence belongs to the neurotoxin 10 (Hwtx-1) family. 08 (Gtx1-15) subfamily. In terms of tissue distribution, expressed by the venom gland.

It localises to the secreted. In terms of biological role, potent voltage-gated sodium channel blocker. Potently inhibits the voltage-gated sodium channels Nav1.7/SCN9A (IC(50)=0.58-10 nM). Shows a moderate activity on Nav1.1/SCN1A (IC(50)=6 nM), Nav1.2/SCN2A (IC(50)=5-128 nM), Nav1.3/SCN3A (IC(50)=20.3-170 nM), and Nav1.6/SCN8A (IC(50)=17-20.1 nM). Shows an unclear inhibition of Nav1.4/SCN4A (IC(50)=200 nM to &gt;10 uM), Nav1.5/SCN5A (IC(50)=140 nM to &gt;10 uM) and Nav1.8/SCN10A (IC(50)=68-12200 nM). Weakly blocks the low voltage-gated calcium channels Cav3.1/CACNA1G (30% inhibition of the peak current by 9.8 nM of the toxin). It shows moderate affinity for lipid bilayers. This chain is Toxin GTx1-15, found in Grammostola rosea (Chilean rose tarantula).